A 108-amino-acid polypeptide reads, in one-letter code: MALWMHLLPLLALLALWGPEPAPAFVNQHLCGPHLVEALYLVCGERGFFYAPKTRREAEDLQVGQVELGGGSITGSLPPLEGPMQKRGVVDQCCTSICSLYQLQNYCN.

A signal peptide spans 1 to 24 (MALWMHLLPLLALLALWGPEPAPA). Cystine bridges form between Cys-31–Cys-94, Cys-43–Cys-107, and Cys-93–Cys-98. Residues 57–85 (EAEDLQVGQVELGGGSITGSLPPLEGPMQ) constitute a propeptide, c peptide.

It belongs to the insulin family. As to quaternary structure, heterodimer of a B chain and an A chain linked by two disulfide bonds.

It is found in the secreted. Functionally, insulin decreases blood glucose concentration. It increases cell permeability to monosaccharides, amino acids and fatty acids. It accelerates glycolysis, the pentose phosphate cycle, and glycogen synthesis in liver. The polypeptide is Insulin (INS) (Aotus trivirgatus (Three-striped night monkey)).